Consider the following 151-residue polypeptide: Ribonuclease H (151 aa).

Residues 1–146 (MPDLYAYTDG…ADELARAGMA (146 aa)) enclose the RNase H type-1 domain. Mg(2+)-binding residues include D9, E52, D74, and D138.

The protein belongs to the RNase H family. In terms of assembly, monomer. Mg(2+) is required as a cofactor.

The protein resides in the cytoplasm. It catalyses the reaction Endonucleolytic cleavage to 5'-phosphomonoester.. In terms of biological role, endonuclease that specifically degrades the RNA of RNA-DNA hybrids. The polypeptide is Ribonuclease H (Cereibacter sphaeroides (strain ATCC 17029 / ATH 2.4.9) (Rhodobacter sphaeroides)).